The primary structure comprises 1078 residues: Zinc finger protein 827 (1078 aa).

Residues methionine 1–lysine 10 show a composition bias toward basic and acidic residues. The mediates direct interaction with RBBP4 stretch occupies residues methionine 1–serine 14. The segment at methionine 1 to proline 76 is disordered. The short motif at arginine 3–lysine 5 is the RRK motif; mediates NuRD recruitment to telomeres element. Composition is skewed to polar residues over residues tyrosine 33–glutamate 42 and glutamate 62–proline 76. Glycyl lysine isopeptide (Lys-Gly) (interchain with G-Cter in SUMO2) cross-links involve residues lysine 175, lysine 215, and lysine 225. The disordered stretch occupies residues serine 307–glutamine 341. The span at valine 326–glutamine 338 shows a compositional bias: pro residues. Glycyl lysine isopeptide (Lys-Gly) (interchain with G-Cter in SUMO2) cross-links involve residues lysine 357 and lysine 369. 3 C2H2-type zinc fingers span residues phenylalanine 371–histidine 393, histidine 399–histidine 421, and phenylalanine 430–histidine 452. Glycyl lysine isopeptide (Lys-Gly) (interchain with G-Cter in SUMO2) cross-links involve residues lysine 463, lysine 472, lysine 520, lysine 546, lysine 577, lysine 584, and lysine 594. The tract at residues isoleucine 466–glycine 490 is disordered. The disordered stretch occupies residues lysine 594–leucine 640. The span at valine 613 to glutamate 627 shows a compositional bias: low complexity. Glycyl lysine isopeptide (Lys-Gly) (interchain with G-Cter in SUMO2) cross-links involve residues lysine 636 and lysine 655. Lysine 670 participates in a covalent cross-link: Glycyl lysine isopeptide (Lys-Gly) (interchain with G-Cter in SUMO1); alternate. Lysine 670 participates in a covalent cross-link: Glycyl lysine isopeptide (Lys-Gly) (interchain with G-Cter in SUMO2); alternate. Glycyl lysine isopeptide (Lys-Gly) (interchain with G-Cter in SUMO2) cross-links involve residues lysine 701, lysine 707, lysine 739, lysine 775, and lysine 795. 2 C2H2-type zinc fingers span residues phenylalanine 814–histidine 836 and tyrosine 842–histidine 864. Glycyl lysine isopeptide (Lys-Gly) (interchain with G-Cter in SUMO2) cross-links involve residues lysine 867 and lysine 888. 2 C2H2-type zinc fingers span residues tyrosine 894–histidine 916 and isoleucine 926–histidine 949. Over residues isoleucine 945–proline 957 the composition is skewed to basic and acidic residues. The interval isoleucine 945–glycine 990 is disordered. Residue lysine 955 forms a Glycyl lysine isopeptide (Lys-Gly) (interchain with G-Cter in SUMO2) linkage. A compositionally biased stretch (low complexity) spans serine 958–serine 974. Basic and acidic residues predominate over residues asparagine 976 to glutamine 985. Lysine 1011 is covalently cross-linked (Glycyl lysine isopeptide (Lys-Gly) (interchain with G-Cter in SUMO2)). C2H2-type zinc fingers lie at residues phenylalanine 1016–histidine 1038 and phenylalanine 1044–histidine 1066.

The protein belongs to the krueppel C2H2-type zinc-finger protein family. In terms of assembly, part of a transcription inhibitory ribonucleoprotein complex composed at least of the circular RNA circZNF827, HNRNPK and HNRNPL. Interacts with the nucleosome remodeling and histone deacetylase/NuRD complex. Interacts with RBBP4; the interaction is direct and recruits RBBP4, a component of the NuRD complex, to telomeres.

The protein resides in the nucleus. Its subcellular location is the chromosome. It localises to the telomere. Its function is as follows. As part of a ribonucleoprotein complex composed at least of HNRNPK, HNRNPL and the circular RNA circZNF827 that nucleates the complex on chromatin, may negatively regulate the transcription of genes involved in neuronal differentiation. Could also recruit the nucleosome remodeling and histone deacetylase/NuRD complex to telomeric regions of chromosomes to regulate chromatin remodeling as part of telomere maintenance. This chain is Zinc finger protein 827 (Znf827), found in Mus musculus (Mouse).